An 800-amino-acid chain; its full sequence is Putative antiporter subunit mnhA2 (800 aa).

A run of 21 helical transmembrane segments spans residues 1–21 (MSLV…LFTL), 29–49 (VAGY…IMKI), 78–98 (GLSL…FFYA), 109–129 (LPRF…IVIA), 133–153 (ILMY…ISYW), 167–187 (FMIT…LYII), 209–229 (FIPM…QFPF), 241–261 (TPVS…FLLF), 272–292 (VYIY…SLTA), 300–320 (GILA…VGLG), 336–356 (ILVL…KCAL), 387–407 (IVML…GFLS), 424–444 (YGFV…ILTF), 472–492 (PWLF…IFFV), 528–548 (VNLP…LALV), 595–615 (IMIT…TVGF), 627–647 (GPLE…LIFI), 651–671 (LTMV…FIAM), 676–696 (LALT…VSFS), 712–732 (TFKI…IFVA), and 768–788 (LDTM…YTLL).

The protein belongs to the CPA3 antiporters (TC 2.A.63) subunit A family. In terms of assembly, may form a heterooligomeric complex that consists of seven subunits: mnhA2, mnhB2, mnhC2, mnhD2, mnhE2, mnhF2 and mnhG2.

The protein localises to the cell membrane. In Staphylococcus epidermidis (strain ATCC 12228 / FDA PCI 1200), this protein is Putative antiporter subunit mnhA2 (mnhA2).